Consider the following 567-residue polypeptide: Proline--tRNA ligase (567 aa).

Belongs to the class-II aminoacyl-tRNA synthetase family. ProS type 1 subfamily. As to quaternary structure, homodimer.

The protein resides in the cytoplasm. It catalyses the reaction tRNA(Pro) + L-proline + ATP = L-prolyl-tRNA(Pro) + AMP + diphosphate. Functionally, catalyzes the attachment of proline to tRNA(Pro) in a two-step reaction: proline is first activated by ATP to form Pro-AMP and then transferred to the acceptor end of tRNA(Pro). As ProRS can inadvertently accommodate and process non-cognate amino acids such as alanine and cysteine, to avoid such errors it has two additional distinct editing activities against alanine. One activity is designated as 'pretransfer' editing and involves the tRNA(Pro)-independent hydrolysis of activated Ala-AMP. The other activity is designated 'posttransfer' editing and involves deacylation of mischarged Ala-tRNA(Pro). The misacylated Cys-tRNA(Pro) is not edited by ProRS. The polypeptide is Proline--tRNA ligase (Stenotrophomonas maltophilia (strain K279a)).